The following is a 66-amino-acid chain: Large ribosomal subunit protein uL29 (66 aa).

This sequence belongs to the universal ribosomal protein uL29 family.

The protein is Large ribosomal subunit protein uL29 of Rhizobium rhizogenes (strain K84 / ATCC BAA-868) (Agrobacterium radiobacter).